Reading from the N-terminus, the 549-residue chain is Ankyrin repeat domain-containing protein SOWAHA (549 aa).

The N-terminal stretch at Met1–Ala17 is a signal peptide. Disordered stretches follow at residues Lys82–Leu219 and Glu235–Leu256. The span at Pro203 to Pro216 shows a compositional bias: low complexity. Residues Glu235 to Ser248 show a composition bias toward basic and acidic residues. Residue Ser260 is modified to Phosphoserine. ANK repeat units follow at residues Ser345 to Ala374 and Gly384 to Val414. The segment at Pro513 to Thr549 is disordered.

The protein belongs to the SOWAH family.

The protein is Ankyrin repeat domain-containing protein SOWAHA (SOWAHA) of Homo sapiens (Human).